The sequence spans 442 residues: MVSKGKTAVVIGAQWGDEGKGKIVDVLSENFRVVARYAGGHNAGHTVLIGGKKFVLQLIPCGVLRPGCRGVIGNGVVLDPIAFLNEVQRLRDLGVAVDGNLFVSSRAHVILPYHRMVELASENAPGRVKIGTTSRGIGPSYEDKMGRRGLRVADLLDSTLLKKHIENACKEKNTIVHALFNAEPIDPDKMYNEYAKAAEKVAPFVTDTAVLLNNAINSGESVMFEGAQGTMLDIDHGTYPFVTSSSATSGGAVIGTGVPPTSISTVIGVTKAYCTRVGEGPFPSELHDAMGDAIRKKGNEFGAVTGRPRRTGWLDLPLLRYSNMINGTEWLVVTKLDVLDELDEIPVATSYKIDGKESEEIPAQGCGFDKIEPIYTKLPGWKTDTTKISKYEDLPAKTKEYLKFVEQQSGAKVGILSTGPDRDQSIYTDAFVNALGLKHLGK.

GTP is bound by residues 16-22 (GDEGKGK) and 44-46 (GHT). Asp-17 acts as the Proton acceptor in catalysis. Mg(2+) contacts are provided by Asp-17 and Gly-44. IMP is bound by residues 17–20 (DEGK), 42–45 (NAGH), Thr-133, Arg-147, Gln-228, Thr-243, and Arg-307. His-45 (proton donor) is an active-site residue. 303–309 (AVTGRPR) provides a ligand contact to substrate. Residues Arg-309, 335-337 (KLD), and 417-419 (STG) each bind GTP.

It belongs to the adenylosuccinate synthetase family. Homodimer. Mg(2+) serves as cofactor.

It is found in the cytoplasm. The catalysed reaction is IMP + L-aspartate + GTP = N(6)-(1,2-dicarboxyethyl)-AMP + GDP + phosphate + 2 H(+). Its pathway is purine metabolism; AMP biosynthesis via de novo pathway; AMP from IMP: step 1/2. Its function is as follows. Plays an important role in the de novo pathway of purine nucleotide biosynthesis. Catalyzes the first committed step in the biosynthesis of AMP from IMP. The polypeptide is Adenylosuccinate synthetase (Koribacter versatilis (strain Ellin345)).